The sequence spans 284 residues: Putative ABC transporter ATP-binding protein sll0385 (284 aa).

An ABC transporter domain is found at 51 to 278 (IRVRELSFAY…QTLMESHGLE (228 aa)). Position 84-91 (84-91 (GHNGCGKT)) interacts with ATP.

The protein belongs to the ABC transporter superfamily.

The protein resides in the cell inner membrane. Its function is as follows. Probably part of an ABC transporter complex. Responsible for energy coupling to the transport system. The protein is Putative ABC transporter ATP-binding protein sll0385 of Synechocystis sp. (strain ATCC 27184 / PCC 6803 / Kazusa).